Here is a 605-residue protein sequence, read N- to C-terminus: Adenine deaminase (605 aa).

Belongs to the metallo-dependent hydrolases superfamily. Adenine deaminase family. Requires Mn(2+) as cofactor.

The enzyme catalyses adenine + H2O + H(+) = hypoxanthine + NH4(+). The sequence is that of Adenine deaminase from Staphylothermus marinus (strain ATCC 43588 / DSM 3639 / JCM 9404 / F1).